A 451-amino-acid polypeptide reads, in one-letter code: Chromosomal replication initiator protein DnaA (451 aa).

Residues 1 to 77 form a domain I, interacts with DnaA modulators region; sequence MTENEQIFWN…EVYNAQISVD (77 aa). The segment at 77-110 is domain II; sequence DYVFEEDLMIEQNQTKINQKPKQQALNSLPTVTS. The interval 111-329 is domain III, AAA+ region; it reads DLNSKYSFEN…GALKDISLGA (219 aa). ATP-binding residues include Gly-155, Gly-157, Lys-158, and Thr-159. Residues 330-451 form a domain IV, binds dsDNA region; sequence NFKQIDTITV…EIETIKNKIK (122 aa).

This sequence belongs to the DnaA family. As to quaternary structure, oligomerizes as a right-handed, spiral filament on DNA at oriC.

The protein resides in the cytoplasm. In terms of biological role, plays an essential role in the initiation and regulation of chromosomal replication. ATP-DnaA binds to the origin of replication (oriC) to initiate formation of the DNA replication initiation complex once per cell cycle. Binds the DnaA box (a 9 base pair repeat at the origin) and separates the double-stranded (ds)DNA. Forms a right-handed helical filament on oriC DNA; dsDNA binds to the exterior of the filament while single-stranded (ss)DNA is stabiized in the filament's interior. The ATP-DnaA-oriC complex binds and stabilizes one strand of the AT-rich DNA unwinding element (DUE), permitting loading of DNA polymerase. After initiation quickly degrades to an ADP-DnaA complex that is not apt for DNA replication. Binds acidic phospholipids. This chain is Chromosomal replication initiator protein DnaA, found in Streptococcus pyogenes serotype M49 (strain NZ131).